A 250-amino-acid polypeptide reads, in one-letter code: Probable transcriptional regulatory protein Ppha_0657 (250 aa).

It belongs to the TACO1 family.

Its subcellular location is the cytoplasm. In Pelodictyon phaeoclathratiforme (strain DSM 5477 / BU-1), this protein is Probable transcriptional regulatory protein Ppha_0657.